The following is a 656-amino-acid chain: Cyclic AMP-dependent transcription factor ATF-6 alpha (656 aa).

Residues 1-137 are transcription activation; that stretch reads MESPFSPVLP…SPSSAEPLKE (137 aa). A Glycyl lysine isopeptide (Lys-Gly) (interchain with G-Cter in SUMO2) cross-link involves residue lysine 75. Low complexity-rich tracts occupy residues 81-101 and 111-121; these read LSPASSSCSVSSPRSTDSCSS and LLSSSQSPLSL. The interval 81–171 is disordered; the sequence is LSPASSSCSV…SKPSVQPKPL (91 aa). A Glycyl lysine isopeptide (Lys-Gly) (interchain with G-Cter in ubiquitin) cross-link involves residue lysine 139. A bZIP domain is found at 293–356; the sequence is VLRRQQRMIK…DQVVSENQRL (64 aa). A basic motif region spans residues 295-326; sequence RRQQRMIKNRESACQSRKKKKEYMLGLEARLK. Residues 335 to 342 are leucine-zipper; that stretch reads LKKENGSL. A helical; Signal-anchor for type II membrane protein transmembrane segment spans residues 378-398; that stretch reads NYGPMSMLEQDSRRVKPSVSP. The Lumenal portion of the chain corresponds to 399–656; that stretch reads ANQRRHLLEF…VVSTLPESVQ (258 aa). The tract at residues 455-575 is interaction with THBS4; the sequence is QPLINTTESL…ATTHNKTTRP (121 aa). 3 N-linked (GlcNAc...) asparagine glycosylation sites follow: asparagine 459, asparagine 570, and asparagine 629. A disordered region spans residues 632–656; it reads STFFGSPPTATETTHVVSTLPESVQ.

Belongs to the bZIP family. ATF subfamily. As to quaternary structure, interacts with XBP1 isoform 2; the interaction occurs in a ER stress-dependent manner. Interacts with LACC1. In terms of assembly, interacts with THBS4 (via EGF-like 3; calcium-binding domain) which facilitates its processing, activation and nuclear translocation. Interacts (via lumenal domain) with THBS1. Homodimer and heterodimer with ATF6-beta. The dimer interacts with the nuclear transcription factor Y (NF-Y) trimer through direct binding to NF-Y subunit C (NF-YC). Also interacts with the transcription factors GTF2I, YY1 and SRF. During unfolded protein response, a fragment of approximately 50 kDa containing the cytoplasmic transcription factor domain is released by proteolysis. The cleavage seems to be performed sequentially by site-1 (MBTPS1, S1P) and site-2 (MBTPS2, S2P) proteases. Post-translationally, N-glycosylated; in its luminal domain. The glycosylation status may serve as a sensor for ER homeostasis, resulting in ATF6 activation to trigger the unfolded protein response (UPR). In terms of processing, ubiquitinated by RNF186 at Lys-139, which is required for pattern recognition receptor-induced unfolded protein response-associated outcomes.

The protein localises to the endoplasmic reticulum membrane. It localises to the golgi apparatus membrane. It is found in the nucleus. In terms of biological role, precursor of the transcription factor form (Processed cyclic AMP-dependent transcription factor ATF-6 alpha), which is embedded in the endoplasmic reticulum membrane. Endoplasmic reticulum stress promotes processing of this form, releasing the transcription factor form that translocates into the nucleus, where it activates transcription of genes involved in the unfolded protein response (UPR). Its function is as follows. Transcription factor that initiates the unfolded protein response (UPR) during endoplasmic reticulum stress by activating transcription of genes involved in the UPR. Binds DNA on the 5'-CCAC[GA]-3'half of the ER stress response element (ERSE) (5'-CCAAT-N(9)-CCAC[GA]-3') and of ERSE II (5'-ATTGG-N-CCACG-3'). Binding to ERSE requires binding of NF-Y to ERSE. Could also be involved in activation of transcription by the serum response factor. May play a role in foveal development and cone function in the retina. The sequence is that of Cyclic AMP-dependent transcription factor ATF-6 alpha (Atf6) from Rattus norvegicus (Rat).